The chain runs to 426 residues: Histidine--tRNA ligase (426 aa).

Belongs to the class-II aminoacyl-tRNA synthetase family. In terms of assembly, homodimer.

The protein resides in the cytoplasm. It catalyses the reaction tRNA(His) + L-histidine + ATP = L-histidyl-tRNA(His) + AMP + diphosphate + H(+). The polypeptide is Histidine--tRNA ligase (Streptococcus pyogenes serotype M6 (strain ATCC BAA-946 / MGAS10394)).